Here is a 223-residue protein sequence, read N- to C-terminus: Twisted gastrulation protein homolog 1 (223 aa).

Residues 1–25 (MKLHYVAVLTLAILMFLTWLPASLS) form the signal peptide. N-linked (GlcNAc...) asparagine glycosylation is found at asparagine 52 and asparagine 81.

Belongs to the twisted gastrulation protein family. In terms of assembly, interacts with CHRD and BMP4. This interaction enhances CHRD/BMP4 complex formation. Interacts with BMP7.

The protein resides in the secreted. May be involved in dorsoventral axis formation. Seems to antagonize BMP signaling by forming ternary complexes with CHRD and BMPs, thereby preventing BMPs from binding to their receptors. In addition to the anti-BMP function, also has pro-BMP activity, partly mediated by cleavage and degradation of CHRD, which releases BMPs from ternary complexes. May be an important modulator of BMP-regulated cartilage development and chondrocyte differentiation. May play a role in thymocyte development. This Pongo abelii (Sumatran orangutan) protein is Twisted gastrulation protein homolog 1 (TWSG1).